The sequence spans 212 residues: Nitric oxide synthase (212 aa).

Tyr-11 contacts heme b. The interval 30 to 50 (KKRAIGFKKLAKAVKFSTKLM) is calmodulin-binding. Residues 60-212 (ATILYATETG…AVDTLLEELG (153 aa)) form the Flavodoxin-like domain. A disordered region spans residues 155–175 (SYSDSRKSSSDEPEHKDNFES). A compositionally biased stretch (basic and acidic residues) spans 158–173 (DSRKSSSDEPEHKDNF). 186-212 (AFGLGSRAYPHFCAFARAVDTLLEELG) contacts FMN.

This sequence belongs to the NOS family. Heme b serves as cofactor. FAD is required as a cofactor. It depends on FMN as a cofactor.

The catalysed reaction is 2 L-arginine + 3 NADPH + 4 O2 + H(+) = 2 L-citrulline + 2 nitric oxide + 3 NADP(+) + 4 H2O. Produces nitric oxide (NO) which is a messenger molecule with diverse functions throughout the body. The protein is Nitric oxide synthase of Squalus acanthias (Spiny dogfish).